The sequence spans 287 residues: Elongation factor Ts (287 aa).

Positions 80 to 83 are involved in Mg(2+) ion dislocation from EF-Tu; sequence TDFL.

The protein belongs to the EF-Ts family.

It is found in the cytoplasm. Functionally, associates with the EF-Tu.GDP complex and induces the exchange of GDP to GTP. It remains bound to the aminoacyl-tRNA.EF-Tu.GTP complex up to the GTP hydrolysis stage on the ribosome. This Pseudomonas putida (strain ATCC 47054 / DSM 6125 / CFBP 8728 / NCIMB 11950 / KT2440) protein is Elongation factor Ts.